Here is a 335-residue protein sequence, read N- to C-terminus: Glycerol-3-phosphate dehydrogenase [NAD(P)+] (335 aa).

The NADPH site is built by tryptophan 12 and lysine 106. Sn-glycerol 3-phosphate is bound by residues lysine 106, glycine 136, and serine 138. Alanine 140 contacts NADPH. Residues lysine 191, aspartate 244, serine 254, arginine 255, and asparagine 256 each contribute to the sn-glycerol 3-phosphate site. Lysine 191 functions as the Proton acceptor in the catalytic mechanism. NADPH is bound at residue arginine 255. The NADPH site is built by valine 279 and glutamate 281.

The protein belongs to the NAD-dependent glycerol-3-phosphate dehydrogenase family.

It is found in the cytoplasm. The enzyme catalyses sn-glycerol 3-phosphate + NAD(+) = dihydroxyacetone phosphate + NADH + H(+). It carries out the reaction sn-glycerol 3-phosphate + NADP(+) = dihydroxyacetone phosphate + NADPH + H(+). It participates in membrane lipid metabolism; glycerophospholipid metabolism. Catalyzes the reduction of the glycolytic intermediate dihydroxyacetone phosphate (DHAP) to sn-glycerol 3-phosphate (G3P), the key precursor for phospholipid synthesis. In Fusobacterium nucleatum subsp. nucleatum (strain ATCC 25586 / DSM 15643 / BCRC 10681 / CIP 101130 / JCM 8532 / KCTC 2640 / LMG 13131 / VPI 4355), this protein is Glycerol-3-phosphate dehydrogenase [NAD(P)+].